Here is a 404-residue protein sequence, read N- to C-terminus: Cytochrome P450 monooxygenase avaI (404 aa).

Residue cysteine 382 participates in heme binding.

This sequence belongs to the cytochrome P450 family. The cofactor is heme.

The protein operates within secondary metabolite biosynthesis. Cytochrome P450 monooxygenase; part of the cluster that mediates the biosynthesis of a highly modified cyclo-arginine-tryptophan dipeptide (cRW). The first step of the pathway is perfornmed by the arginine-containing cyclodipeptide synthase (RCPDS) avaA that acts as the scaffold-generating enzyme and is responsible for formation of the cyclo-Arg-Trp (cRW) diketopiperazine. AvaB then acts as a multifunctional flavoenzyme that is responsible for generating the cyclo-Arg-formylkynurenine DKP, which can be deformylated by avaC. AvaB then further catalyzes an additional N-oxidation followed by cyclization and dehydration. The next step is an N-acetylation of the guanidine group catalyzed by the arginine N-acetyltransferase avaD. The roles of the additional enzymes identified within the ava cluster still have to be determined. This is Cytochrome P450 monooxygenase avaI from Aspergillus versicolor.